The primary structure comprises 124 residues: Glutaredoxin-2 (124 aa).

Residues cysteine 13 and cysteine 16 are joined by a disulfide bond.

This sequence belongs to the glutaredoxin family. Homodimer.

It localises to the host cytoplasm. Its function is as follows. Glutaredoxin necessary for virion morphogenesis and virus replication. Functions as a thiol-disulfide transfer protein between membrane-associated OPG128 and substrates OPG095 or OPG053. The complete pathway for formation of disulfide bonds in intracellular virion membrane proteins sequentially involves oxidation of OPG072, OPG128 and OPG088. Exhibit thioltransferase and dehydroascorbate reductase activities in vitro. This chain is Glutaredoxin-2 (OPG088), found in Oryctolagus cuniculus (Rabbit).